A 512-amino-acid chain; its full sequence is Glycosyltransferase sdnJ (512 aa).

The first 24 residues, 1–24 (MHAKRPSVLFFTISDFGYVNVVLA), serve as a signal peptide directing secretion. Asparagine 207 is a glycosylation site (N-linked (GlcNAc...) asparagine).

The protein belongs to the UDP-glycosyltransferase family.

The enzyme catalyses sordaricin + GDP-6-deoxy-alpha-D-altrose = 4'-O-demethylsordarin + GDP + H(+). Its pathway is antibiotic biosynthesis. Its function is as follows. Glycosyltransferase; part of the gene cluster that mediates the biosynthesis of sordarin and hypoxysordarin, glycoside antibiotics with a unique tetracyclic diterpene aglycone structure. First, the geranylgeranyl diphosphate synthase sdnC constructs GGDP from farnesyl diphosphate and isopentenyl diphosphate. The diterpene cyclase sdnA then catalyzes the cyclization of GGDP to afford cycloaraneosene. Cycloaraneosene is then hydroxylated four times by the putative cytochrome P450 monooxygenases sdnB, sdnE, sdnF and sdnH to give a hydroxylated cycloaraneosene derivative such as cycloaraneosene-8,9,13,19-tetraol. Although the order of the hydroxylations is unclear, at least C8, C9 and C13 of the cycloaraneosene skeleton are hydroxylated before the sordaricin formation. Dehydration of the 13-hydroxy group of the hydroxylated cycloaraneosene derivative might be catalyzed by an unassigned hypothetical protein such as sdnG and sdnP to construct the cyclopentadiene moiety. The FAD-dependent oxidoreductase sdnN is proposed to catalyze the oxidation at C9 of the hydroxylated cycloaraneosene derivative and also catalyze the Baeyer-Villiger oxidation to give the lactone intermediate. The presumed lactone intermediate would be hydrolyzed to give an acrolein moiety and a carboxylate moiety. Then, [4+2]cycloaddition would occur between the acrolein moiety and the cyclopentadiene moiety to give sordaricin. SdnN might also be involved in the [4+2]cycloaddition after the hypothesized oxidation to accommodate the oxidized product and prompt the [4+2]cycloaddition. GDP-6-deoxy-D-altrose may be biosynthesized from GDP-D-mannose by the putative GDP-mannose-4,6-dehydratase sdnI and the short-chain dehydrogenase sdnK. The glycosyltransferase sdnJ catalyzes the attachment of 6-deoxy-D-altrose onto the 19-hydroxy group of sordaricin to give 4'-O-demethylsordarin. The methyltransferase sdnD would complete the biosynthesis of sordarin. Sordarin can be further modified into hypoxysordarin. The unique acyl chain at the 3'-hydroxy group of hypoxysordarin would be constructed by an iterative type I PKS sdnO and the trans-acting polyketide methyltransferase sdnL. SdnL would be responsible for the introduction of an alpha-methyl group of the polyketide chain. Alternatively, the beta-lactamase-like protein sdnR might be responsible for the cleavage and transfer of the polyketide chain from the PKS sdnO to sordarin. Two putative cytochrome P450 monooxygenases, sdnQ and sdnT, might catalyze the epoxidations of the polyketide chain to complete the biosynthesis of hypoxysordarin. Transcriptional regulators sdnM and sdnS are presumably encoded for the transcriptional regulation of the expression of the sdn gene cluster. This is Glycosyltransferase sdnJ from Sordaria araneosa (Pleurage araneosa).